The following is a 149-amino-acid chain: Transcriptional repressor NrdR (149 aa).

The segment at 3-34 is a zinc-finger region; sequence CPFCGHAATQVIDTRMSEEGDTVRRRRRCESC. Positions 49–139 constitute an ATP-cone domain; that stretch reads PAVVKKNGSR…VYRSFEDVSE (91 aa).

This sequence belongs to the NrdR family. The cofactor is Zn(2+).

Its function is as follows. Negatively regulates transcription of bacterial ribonucleotide reductase nrd genes and operons by binding to NrdR-boxes. This is Transcriptional repressor NrdR from Ralstonia nicotianae (strain ATCC BAA-1114 / GMI1000) (Ralstonia solanacearum).